A 207-amino-acid chain; its full sequence is Probable nicotinate-nucleotide adenylyltransferase (207 aa).

This sequence belongs to the NadD family.

The enzyme catalyses nicotinate beta-D-ribonucleotide + ATP + H(+) = deamido-NAD(+) + diphosphate. It functions in the pathway cofactor biosynthesis; NAD(+) biosynthesis; deamido-NAD(+) from nicotinate D-ribonucleotide: step 1/1. Catalyzes the reversible adenylation of nicotinate mononucleotide (NaMN) to nicotinic acid adenine dinucleotide (NaAD). In Synechococcus sp. (strain JA-3-3Ab) (Cyanobacteria bacterium Yellowstone A-Prime), this protein is Probable nicotinate-nucleotide adenylyltransferase.